We begin with the raw amino-acid sequence, 445 residues long: tRNA modification GTPase MnmE (445 aa).

Residues arginine 20, glutamate 79, and lysine 119 each contribute to the (6S)-5-formyl-5,6,7,8-tetrahydrofolate site. Residues 215–371 (GLKLAIIGPP…ILKNIENIAE (157 aa)) enclose the TrmE-type G domain. Asparagine 225 provides a ligand contact to K(+). GTP-binding positions include 225–230 (NTGKSS), 244–250 (SNIAGTT), and 269–272 (DTAG). Serine 229 provides a ligand contact to Mg(2+). K(+) contacts are provided by serine 244, isoleucine 246, and threonine 249. Threonine 250 serves as a coordination point for Mg(2+). Lysine 445 is a (6S)-5-formyl-5,6,7,8-tetrahydrofolate binding site.

This sequence belongs to the TRAFAC class TrmE-Era-EngA-EngB-Septin-like GTPase superfamily. TrmE GTPase family. Homodimer. Heterotetramer of two MnmE and two MnmG subunits. The cofactor is K(+).

The protein resides in the cytoplasm. Exhibits a very high intrinsic GTPase hydrolysis rate. Involved in the addition of a carboxymethylaminomethyl (cmnm) group at the wobble position (U34) of certain tRNAs, forming tRNA-cmnm(5)s(2)U34. The protein is tRNA modification GTPase MnmE of Rickettsia typhi (strain ATCC VR-144 / Wilmington).